A 786-amino-acid chain; its full sequence is Endonuclease MutS2 (786 aa).

335–342 lines the ATP pocket; the sequence is GPNTGGKT. In terms of domain architecture, Smr spans 711 to 786; that stretch reads LDLRGERFEN…GLGVTVVELK (76 aa).

The protein belongs to the DNA mismatch repair MutS family. MutS2 subfamily. Homodimer. Binds to stalled ribosomes, contacting rRNA.

Functionally, endonuclease that is involved in the suppression of homologous recombination and thus may have a key role in the control of bacterial genetic diversity. In terms of biological role, acts as a ribosome collision sensor, splitting the ribosome into its 2 subunits. Detects stalled/collided 70S ribosomes which it binds and splits by an ATP-hydrolysis driven conformational change. Acts upstream of the ribosome quality control system (RQC), a ribosome-associated complex that mediates the extraction of incompletely synthesized nascent chains from stalled ribosomes and their subsequent degradation. Probably generates substrates for RQC. The polypeptide is Endonuclease MutS2 (Bacillus cereus (strain Q1)).